The chain runs to 440 residues: Ferredoxin--NADP reductase (440 aa).

In terms of domain architecture, CpcD-like spans 17 to 75; that stretch reads SRVFVYEVVGMRQNEETDQTNYPIRKSGSVFIRVPYNRMNQEMQRITRLGGKIVSIQTV. Residues 98-142 form a disordered region; sequence AKSEGNGKATPVKTDSGAKGFAKPPAEEQLKKKDNKGNTMTQAKA. Over residues 122-133 the composition is skewed to basic and acidic residues; sequence PAEEQLKKKDNK. Positions 155–279 constitute an FAD-binding FR-type domain; sequence NAPFIGKVIS…TGPVGKEMLL (125 aa). Residues 214-217, 235-237, Tyr-241, 253-255, and Thr-294 each bind FAD; these read RLYS, CVR, and VCS. The NADP(+) site is built by Ser-217 and Arg-237. Residues Thr-294, 330–331, 360–361, 370–374, 399–400, and Glu-438 contribute to the NADP(+) site; these read VP, SR, RMYIQ, and GL.

The protein belongs to the ferredoxin--NADP reductase type 1 family. The cofactor is FAD.

The protein localises to the cellular thylakoid membrane. It catalyses the reaction 2 reduced [2Fe-2S]-[ferredoxin] + NADP(+) + H(+) = 2 oxidized [2Fe-2S]-[ferredoxin] + NADPH. The chain is Ferredoxin--NADP reductase (petH) from Nostoc sp. (strain PCC 7120 / SAG 25.82 / UTEX 2576).